Here is a 376-residue protein sequence, read N- to C-terminus: Ribonuclease D (376 aa).

The 3'-5' exonuclease domain maps to I8–S176. An HRDC domain is found at R214 to E294.

Belongs to the RNase D family. Requires a divalent metal cation as cofactor.

It localises to the cytoplasm. It carries out the reaction Exonucleolytic cleavage that removes extra residues from the 3'-terminus of tRNA to produce 5'-mononucleotides.. Exonuclease involved in the 3' processing of various precursor tRNAs. Initiates hydrolysis at the 3'-terminus of an RNA molecule and releases 5'-mononucleotides. The chain is Ribonuclease D from Pseudomonas paraeruginosa (strain DSM 24068 / PA7) (Pseudomonas aeruginosa (strain PA7)).